Here is a 220-residue protein sequence, read N- to C-terminus: Ribosomal RNA small subunit methyltransferase Nep1 (220 aa).

Residues G178, G183, and 196-201 contribute to the S-adenosyl-L-methionine site; that span reads IYKEPL.

It belongs to the class IV-like SAM-binding methyltransferase superfamily. RNA methyltransferase NEP1 family. Homodimer.

The catalysed reaction is a pseudouridine in rRNA + S-adenosyl-L-methionine = an N(1)-methylpseudouridine in rRNA + S-adenosyl-L-homocysteine + H(+). Its function is as follows. Methyltransferase involved in ribosomal biogenesis. Specifically catalyzes the N1-methylation of the pseudouridine corresponding to position 914 in M.jannaschii 16S rRNA. In Thermococcus sibiricus (strain DSM 12597 / MM 739), this protein is Ribosomal RNA small subunit methyltransferase Nep1.